Here is an 800-residue protein sequence, read N- to C-terminus: Internalin A (800 aa).

An N-terminal signal peptide occupies residues 1–35 (MRKKRYVWLKSILVAILVFGSGVWINTSNGTNAQA). The LRRNT domain maps to 36 to 76 (ATITQDTPINQIFTDAALAEKMKTVLGKTNVTDTVSQTDLD). LRR repeat units follow at residues 77 to 98 (QVTT…EYLN), 99 to 120 (NLTQ…KDLT), 121 to 142 (KLVD…ANLT), 143 to 164 (NLTG…KNLT), 165 to 186 (NLNR…SGLT), 187 to 207 (NLQQ…ANLT), 208 to 229 (TLER…AKLT), 230 to 251 (NLES…GILT), 252 to 273 (NLDE…ASLT), 274 to 295 (NLTD…SGLT), 296 to 317 (KLTE…AGLT), 318 to 339 (ALTN…SNLK), 340 to 361 (NLTY…SSLT), 362 to 383 (KLQR…ANLT), and 384 to 405 (NINW…ANLT). Positions 416-505 (AWTNAPVNYK…AIFNAKFHVD (90 aa)) constitute an LRRCT domain. One copy of the B-1 repeat lies at 518 to 587 (LLTEPAKPVK…TTSQTVDYQG (70 aa)). A 3 X approximate tandem repeats, type B region spans residues 518 to 706 (LLTEPAKPVK…ITLYAQFTKN (189 aa)). The B-2 repeat unit spans residues 588 to 657 (LLQEPTPPTK…STTQAVDYQG (70 aa)). A B-3 repeat occupies 658–706 (LLKEPKAPTKAGYTFKGWYDEKTDGKKWDFATDKMPANDITLYAQFTKN). Residues 705–757 (KNPVAPPTTGGNTPPTTNNGGNTTPPSANIPGSDTSNTSTGNSASTTSTMNAY) are disordered. Positions 711–753 (PTTGGNTPPTTNNGGNTTPPSANIPGSDTSNTSTGNSASTTST) are enriched in low complexity. The LPXTG sorting signal motif lies at 767–771 (LPTTG). At threonine 770 the chain carries Pentaglycyl murein peptidoglycan amidated threonine. The propeptide at 771–800 (GDSDNALYLLLGLLAVGTAMALTKKARASK) is removed by sortase A.

Belongs to the internalin family.

The protein resides in the secreted. The protein localises to the cell wall. Mediates the entry of Listeria monocytogenes into cells. Binds to host receptor cadherin-1 (E-cadherin, CDH1). The sequence is that of Internalin A (inlA) from Listeria monocytogenes serotype 1/2a (strain 10403S).